We begin with the raw amino-acid sequence, 152 residues long: Ribosome maturation factor RimP (152 aa).

Belongs to the RimP family.

The protein resides in the cytoplasm. In terms of biological role, required for maturation of 30S ribosomal subunits. This Burkholderia cenocepacia (strain ATCC BAA-245 / DSM 16553 / LMG 16656 / NCTC 13227 / J2315 / CF5610) (Burkholderia cepacia (strain J2315)) protein is Ribosome maturation factor RimP.